The following is a 274-amino-acid chain: Thiamine kinase (274 aa).

It belongs to the thiamine kinase family.

The enzyme catalyses thiamine + ATP = thiamine phosphate + ADP + H(+). Its pathway is cofactor biosynthesis; thiamine diphosphate biosynthesis; thiamine phosphate from thiamine: step 1/1. Functionally, catalyzes the ATP-dependent phosphorylation of thiamine to thiamine phosphate. Is involved in thiamine salvage. This chain is Thiamine kinase, found in Salmonella paratyphi A (strain ATCC 9150 / SARB42).